Here is a 292-residue protein sequence, read N- to C-terminus: ATP phosphoribosyltransferase (292 aa).

Belongs to the ATP phosphoribosyltransferase family. Long subfamily. Mg(2+) is required as a cofactor.

It is found in the cytoplasm. It carries out the reaction 1-(5-phospho-beta-D-ribosyl)-ATP + diphosphate = 5-phospho-alpha-D-ribose 1-diphosphate + ATP. It functions in the pathway amino-acid biosynthesis; L-histidine biosynthesis; L-histidine from 5-phospho-alpha-D-ribose 1-diphosphate: step 1/9. Feedback inhibited by histidine. Its function is as follows. Catalyzes the condensation of ATP and 5-phosphoribose 1-diphosphate to form N'-(5'-phosphoribosyl)-ATP (PR-ATP). Has a crucial role in the pathway because the rate of histidine biosynthesis seems to be controlled primarily by regulation of HisG enzymatic activity. The sequence is that of ATP phosphoribosyltransferase from Thermodesulfovibrio yellowstonii (strain ATCC 51303 / DSM 11347 / YP87).